The sequence spans 173 residues: Photosystem I assembly protein Ycf3 (173 aa).

3 TPR repeats span residues 35-68, 72-105, and 120-153; these read AYVY…EENP, GETL…NPKQ, and GRTA…NPGG.

Belongs to the Ycf3 family.

It is found in the cellular thylakoid membrane. Its function is as follows. Essential for the assembly of the photosystem I (PSI) complex. May act as a chaperone-like factor to guide the assembly of the PSI subunits. The polypeptide is Photosystem I assembly protein Ycf3 (Synechococcus sp. (strain WH7803)).